A 1196-amino-acid polypeptide reads, in one-letter code: [NU+] prion formation protein 1 (1196 aa).

Disordered stretches follow at residues 1-49 (MPPK…KSSY) and 103-125 (TYKQSAVTPNQSGTPTPSASTTS). Composition is skewed to polar residues over residues 39–49 (GSNNASKKSSY) and 103–113 (TYKQSAVTPNQ). Over residues 114 to 125 (SGTPTPSASTTS) the composition is skewed to low complexity. Residue S443 is modified to Phosphoserine. ABC transporter domains lie at 570–786 (IEIV…YYTL) and 812–1129 (AKMT…ADAV). Residues 604-611 (GRNGAGKS) and 846-853 (GPNGAGKS) contribute to the ATP site. In terms of domain architecture, Chromo spans 942–1003 (RAIEAIVGRQ…HEASREGLGY (62 aa)). Disordered stretches follow at residues 1137–1166 (AKPSVDDDDSPANIKVKQRKKRLTRNEKKL) and 1177–1196 (EWLSSPKGTPKPVDTDDEED). The residue at position 1191 (T1191) is a Phosphothreonine.

Belongs to the ABC transporter superfamily. ABCF family. EF3 subfamily.

Its subcellular location is the cytoplasm. The protein resides in the nucleus. Functionally, may be involved in the mRNA export process. Forms the [NU+] prion and induces [PSI+] prion formation. In Saccharomyces cerevisiae (strain ATCC 204508 / S288c) (Baker's yeast), this protein is [NU+] prion formation protein 1 (NEW1).